Consider the following 340-residue polypeptide: 4-hydroxy-2-oxovalerate aldolase (340 aa).

One can recognise a Pyruvate carboxyltransferase domain in the interval 4 to 255; sequence VVIHDPTLRD…ATGIDLYALL (252 aa). Residue 12–13 participates in substrate binding; that stretch reads RD. Aspartate 13 lines the Mn(2+) pocket. Catalysis depends on histidine 16, which acts as the Proton acceptor. Substrate is bound by residues serine 166 and histidine 194. Residues histidine 194 and histidine 196 each coordinate Mn(2+).

The protein belongs to the 4-hydroxy-2-oxovalerate aldolase family.

The enzyme catalyses (S)-4-hydroxy-2-oxopentanoate = acetaldehyde + pyruvate. This is 4-hydroxy-2-oxovalerate aldolase from Streptomyces griseus subsp. griseus (strain JCM 4626 / CBS 651.72 / NBRC 13350 / KCC S-0626 / ISP 5235).